The primary structure comprises 189 residues: Large ribosomal subunit protein uL13 (189 aa).

This sequence belongs to the universal ribosomal protein uL13 family.

This Salmo trutta (Brown trout) protein is Large ribosomal subunit protein uL13 (rpl13a).